Reading from the N-terminus, the 425-residue chain is Proline--tRNA ligase (425 aa).

It belongs to the class-II aminoacyl-tRNA synthetase family. ProS type 2 subfamily. As to quaternary structure, homodimer.

It localises to the cytoplasm. It catalyses the reaction tRNA(Pro) + L-proline + ATP = L-prolyl-tRNA(Pro) + AMP + diphosphate. Catalyzes the attachment of proline to tRNA(Pro) in a two-step reaction: proline is first activated by ATP to form Pro-AMP and then transferred to the acceptor end of tRNA(Pro). The chain is Proline--tRNA ligase from Wolbachia sp. subsp. Brugia malayi (strain TRS).